The primary structure comprises 370 residues: Flagellar P-ring protein (370 aa).

A signal peptide spans 1-21; sequence MRLFSVVLAVFTLLLPSQAFA.

The protein belongs to the FlgI family. As to quaternary structure, the basal body constitutes a major portion of the flagellar organelle and consists of four rings (L,P,S, and M) mounted on a central rod.

The protein resides in the periplasm. It is found in the bacterial flagellum basal body. Assembles around the rod to form the L-ring and probably protects the motor/basal body from shearing forces during rotation. The chain is Flagellar P-ring protein from Alteromonas mediterranea (strain DSM 17117 / CIP 110805 / LMG 28347 / Deep ecotype).